The following is an 87-amino-acid chain: MHTLEMLLLVLLLVPLAPGEGDGQAVGGDRNPSEARRAYKRLLQRPARRMDRGGCTPCGPNLCCSEEFRCGTSTHHQTYGEPACLSY.

The signal sequence occupies residues 1–19; that stretch reads MHTLEMLLLVLLLVPLAPG. Residues 20–52 constitute a propeptide that is removed on maturation; that stretch reads EGDGQAVGGDRNPSEARRAYKRLLQRPARRMDR. 3 cysteine pairs are disulfide-bonded: Cys55–Cys64, Cys58–Cys70, and Cys63–Cys84.

This sequence belongs to the conotoxin Q superfamily. In terms of tissue distribution, expressed by the venom duct.

It is found in the secreted. This Conus caracteristicus (Characteristic cone) protein is Conotoxin Ca6.2.